Here is a 1032-residue protein sequence, read N- to C-terminus: Contactin-1a (1032 aa).

The N-terminal stretch at 1 to 31 (MIPEAFQPRAMKHTTTVLMLALSSRFWSVCA) is a signal peptide. Ig-like C2-type domains follow at residues 46–139 (PVFE…ARVQ), 144–231 (DMFS…KSVF), 249–335 (PADI…THLY), 340–417 (PDWL…AELR), 423–510 (PSFQ…GSLS), and 515–612 (TKIT…AELV). Cystine bridges form between C70/C122 and C166/C219. 3 N-linked (GlcNAc...) asparagine glycosylation sites follow: N119, N216, and N266. Intrachain disulfides connect C271/C319, C361/C401, and C446/C494. 4 N-linked (GlcNAc...) asparagine glycosylation sites follow: N455, N467, N483, and N504. Cysteines 536 and 596 form a disulfide. N-linked (GlcNAc...) asparagine glycosylation occurs at N604. Fibronectin type-III domains follow at residues 619-718 (PPGG…TREA), 723-820 (APSD…SAQD), 825-918 (APII…TKKS), and 920-1015 (PSRP…APAP). The segment at 699–729 (NTLGTGPPSEPSPKTTTREARPIVAPSDIGG) is disordered. N879 carries an N-linked (GlcNAc...) asparagine glycan. The tract at residues 907-926 (ASQRNRIYTKKSPPSRPPKI) is disordered. The N-linked (GlcNAc...) asparagine glycan is linked to N950. G1010 carries GPI-anchor amidated glycine lipidation. A propeptide spans 1011–1032 (SAPAPALASALLLLPLLWTLML) (removed in mature form).

This sequence belongs to the immunoglobulin superfamily. Contactin family. Expressed in brain.

The protein resides in the cell membrane. Functionally, mediates cell surface interactions during nervous system development. This is Contactin-1a (cntn1a) from Danio rerio (Zebrafish).